Consider the following 178-residue polypeptide: Probable apo-citrate lyase phosphoribosyl-dephospho-CoA transferase (178 aa).

The protein belongs to the CitX family.

The enzyme catalyses apo-[citrate lyase ACP] + 2'-(5''-triphospho-alpha-D-ribosyl)-3'-dephospho-CoA = holo-[citrate lyase ACP] + diphosphate. In terms of biological role, transfers 2-(5''-triphosphoribosyl)-3'-dephosphocoenzyme-A on a serine residue to the apo-acyl carrier protein (gamma chain) of the citrate lyase to yield holo-acyl carrier protein. This is Probable apo-citrate lyase phosphoribosyl-dephospho-CoA transferase from Vibrio cholerae serotype O1 (strain ATCC 39541 / Classical Ogawa 395 / O395).